Consider the following 643-residue polypeptide: 1-deoxy-D-xylulose-5-phosphate synthase (643 aa).

Residues His-71 and 112–114 each bind thiamine diphosphate; that span reads SHA. Asp-144 provides a ligand contact to Mg(2+). Residues 145 to 146, Asn-173, Tyr-284, and Glu-365 each bind thiamine diphosphate; that span reads GA. Asn-173 is a Mg(2+) binding site.

The protein belongs to the transketolase family. DXPS subfamily. As to quaternary structure, homodimer. It depends on Mg(2+) as a cofactor. Requires thiamine diphosphate as cofactor.

The enzyme catalyses D-glyceraldehyde 3-phosphate + pyruvate + H(+) = 1-deoxy-D-xylulose 5-phosphate + CO2. Its pathway is metabolic intermediate biosynthesis; 1-deoxy-D-xylulose 5-phosphate biosynthesis; 1-deoxy-D-xylulose 5-phosphate from D-glyceraldehyde 3-phosphate and pyruvate: step 1/1. In terms of biological role, catalyzes the acyloin condensation reaction between C atoms 2 and 3 of pyruvate and glyceraldehyde 3-phosphate to yield 1-deoxy-D-xylulose-5-phosphate (DXP). The sequence is that of 1-deoxy-D-xylulose-5-phosphate synthase from Mycobacterium leprae (strain Br4923).